A 318-amino-acid polypeptide reads, in one-letter code: tRNA pseudouridine synthase B (318 aa).

Catalysis depends on Asp-47, which acts as the Nucleophile.

Belongs to the pseudouridine synthase TruB family. Type 1 subfamily.

The catalysed reaction is uridine(55) in tRNA = pseudouridine(55) in tRNA. In terms of biological role, responsible for synthesis of pseudouridine from uracil-55 in the psi GC loop of transfer RNAs. In Shewanella putrefaciens (strain CN-32 / ATCC BAA-453), this protein is tRNA pseudouridine synthase B.